The primary structure comprises 485 residues: Zinc finger protein 639 (485 aa).

A compositionally biased stretch (basic residues) spans Met1–His14. Disordered regions lie at residues Met1–Gly23 and Asp54–Gln82. At Ser60 the chain carries Phosphoserine. Lys76 participates in a covalent cross-link: Glycyl lysine isopeptide (Lys-Gly) (interchain with G-Cter in SUMO2). At Ser88 the chain carries Phosphoserine. Glycyl lysine isopeptide (Lys-Gly) (interchain with G-Cter in SUMO2) cross-links involve residues Lys177, Lys181, and Lys226. C2H2-type zinc fingers lie at residues Tyr204–His227, Asn233–His255, Tyr260–His283, Tyr289–His311, Phe374–His397, His403–His425, Tyr431–His454, and His460–His482. An interaction with CTNNA2 region spans residues Lys371–Ser455.

The protein belongs to the krueppel C2H2-type zinc-finger protein family. In terms of assembly, interacts with CTNNA2.

It localises to the nucleus. Functionally, binds DNA and may function as a transcriptional repressor. This chain is Zinc finger protein 639 (Znf639), found in Rattus norvegicus (Rat).